Reading from the N-terminus, the 496-residue chain is Probable glycine dehydrogenase (decarboxylating) subunit 2 (496 aa).

Lys-265 is subject to N6-(pyridoxal phosphate)lysine.

This sequence belongs to the GcvP family. C-terminal subunit subfamily. As to quaternary structure, the glycine cleavage system is composed of four proteins: P, T, L and H. In this organism, the P 'protein' is a heterodimer of two subunits. It depends on pyridoxal 5'-phosphate as a cofactor.

It carries out the reaction N(6)-[(R)-lipoyl]-L-lysyl-[glycine-cleavage complex H protein] + glycine + H(+) = N(6)-[(R)-S(8)-aminomethyldihydrolipoyl]-L-lysyl-[glycine-cleavage complex H protein] + CO2. Its function is as follows. The glycine cleavage system catalyzes the degradation of glycine. The P protein binds the alpha-amino group of glycine through its pyridoxal phosphate cofactor; CO(2) is released and the remaining methylamine moiety is then transferred to the lipoamide cofactor of the H protein. This chain is Probable glycine dehydrogenase (decarboxylating) subunit 2, found in Thioalkalivibrio sulfidiphilus (strain HL-EbGR7).